Reading from the N-terminus, the 171-residue chain is Iron-sulfur cluster assembly protein 3 (171 aa).

A mitochondrion-targeting transit peptide spans 1 to 49; it reads MLRQTTKRAFLGLASQNPTPFPVVSRLYHPNVIDHYDNPRNVGSFDKND.

The protein belongs to the NifU family. As to quaternary structure, component of the core Fe-S cluster (ISC) assembly machinery. [2Fe-2S] cluster is required as a cofactor. In terms of tissue distribution, mostly expressed in flowers and pollen, and, to a lower extent, in leaves and roots.

The protein localises to the mitochondrion matrix. Its pathway is cofactor biosynthesis; iron-sulfur cluster biosynthesis. Functionally, scaffold protein for the de novo synthesis of iron-sulfur (Fe-S) clusters within mitochondria, which is required for maturation of both mitochondrial and cytoplasmic [2Fe-2S] and [4Fe-4S] proteins. First, a [2Fe-2S] cluster is transiently assembled on the scaffold protein ISCU (ISU1, ISU2 or ISU3). In a second step, the cluster is released from ISCU, transferred to a glutaredoxin, followed by the formation of mitochondrial [2Fe-2S] proteins, the synthesis of [4Fe-4S] clusters and their target-specific insertion into the recipient apoproteins. Cluster assembly on ISCU depends on the function of the cysteine desulfurase complex NFS1-ISD11, which serves as the sulfur donor for cluster synthesis, the iron-binding protein frataxin as the putative iron donor, and the electron transfer chain comprised of ferredoxin reductase and ferredoxin, which receive their electrons from NADH. This is Iron-sulfur cluster assembly protein 3 (ISU3) from Arabidopsis thaliana (Mouse-ear cress).